A 257-amino-acid chain; its full sequence is Adenylate kinase (257 aa).

Residue 52 to 57 (GAGKGT) participates in ATP binding. An NMP region spans residues 72–101 (ATGDMLRSQVAKKTELGKEAKKIMDQGGLV). AMP contacts are provided by residues threonine 73, arginine 78, 99-101 (GLV), 128-131 (GFPR), and glutamine 135. Positions 169 to 206 (GRLVHPASGRSYHKIFNPPKNDMKDDVTGEPLIQRSDD) are LID. ATP-binding positions include arginine 170 and 179–180 (SY). Positions 203 and 214 each coordinate AMP. An ATP-binding site is contributed by glutamine 242.

Belongs to the adenylate kinase family. AK2 subfamily. In terms of assembly, monomer.

It localises to the cytoplasm. The protein localises to the cytosol. Its subcellular location is the mitochondrion intermembrane space. The enzyme catalyses AMP + ATP = 2 ADP. In terms of biological role, catalyzes the reversible transfer of the terminal phosphate group between ATP and AMP. Plays an important role in cellular energy homeostasis and in adenine nucleotide metabolism. Adenylate kinase activity is critical for regulation of the phosphate utilization and the AMP de novo biosynthesis pathways. The sequence is that of Adenylate kinase (adk1) from Neosartorya fischeri (strain ATCC 1020 / DSM 3700 / CBS 544.65 / FGSC A1164 / JCM 1740 / NRRL 181 / WB 181) (Aspergillus fischerianus).